We begin with the raw amino-acid sequence, 1004 residues long: ABC transporter G family member 25 (1004 aa).

Positions 1 to 27 are cleaved as a signal peptide; sequence MAASQLLAAAVAAAVFLAALLVPPARC. Residues 271 to 291 traverse the membrane as a helical segment; the sequence is ATALFGGILIVILSVVLLLVY. The disordered stretch occupies residues 343 to 373; it reads SDQLAASSNEARHATEGNGKRSKNRKKLAHA. Over residues 352–361 the composition is skewed to basic and acidic residues; the sequence is EARHATEGNG. Residues 362–372 are compositionally biased toward basic residues; it reads KRSKNRKKLAH. One can recognise an ABC transporter domain in the interval 419-659; the sequence is VVFKGLTLSI…FSSLGIKVPE (241 aa). An ATP-binding site is contributed by 451 to 458; it reads GPSGAGKT. A run of 6 helical transmembrane segments spans residues 776 to 796, 804 to 824, 886 to 906, 907 to 927, 943 to 963, and 978 to 998; these read ATLQ…IGTI, FGVA…QLAA, LVFL…AIWF, ELGL…LVGT, WALE…WLIT, and FVLC…IALL.

Belongs to the ABC transporter superfamily. ABCG family. Eye pigment precursor importer (TC 3.A.1.204) subfamily.

Its subcellular location is the membrane. This Oryza sativa subsp. japonica (Rice) protein is ABC transporter G family member 25.